A 234-amino-acid chain; its full sequence is Demethylmenaquinone methyltransferase (234 aa).

Residues Thr-58, Asp-79, and 106–107 (NA) contribute to the S-adenosyl-L-methionine site.

The protein belongs to the class I-like SAM-binding methyltransferase superfamily. MenG/UbiE family.

The enzyme catalyses a 2-demethylmenaquinol + S-adenosyl-L-methionine = a menaquinol + S-adenosyl-L-homocysteine + H(+). The protein operates within quinol/quinone metabolism; menaquinone biosynthesis; menaquinol from 1,4-dihydroxy-2-naphthoate: step 2/2. Methyltransferase required for the conversion of demethylmenaquinol (DMKH2) to menaquinol (MKH2). In Geobacillus sp. (strain WCH70), this protein is Demethylmenaquinone methyltransferase.